We begin with the raw amino-acid sequence, 401 residues long: Diphosphomevalonate decarboxylase (401 aa).

Alanine 2 carries the post-translational modification N-acetylalanine. Residues 24–27 (YWGK), arginine 79, 157–162 (SGSACR), and threonine 213 contribute to the (R)-5-diphosphomevalonate site. Residues 382–401 (VLDDPHHHLLGPDGLPQRDL) are disordered.

This sequence belongs to the diphosphomevalonate decarboxylase family. As to quaternary structure, homodimer.

It is found in the cytoplasm. The enzyme catalyses (R)-5-diphosphomevalonate + ATP = isopentenyl diphosphate + ADP + phosphate + CO2. Its pathway is steroid biosynthesis; cholesterol biosynthesis. Catalyzes the ATP dependent decarboxylation of (R)-5-diphosphomevalonate to form isopentenyl diphosphate (IPP). Functions in the mevalonate (MVA) pathway leading to isopentenyl diphosphate (IPP), a key precursor for the biosynthesis of isoprenoids and sterol synthesis. The chain is Diphosphomevalonate decarboxylase (Mvd) from Rattus norvegicus (Rat).